Here is a 242-residue protein sequence, read N- to C-terminus: DNA repair protein RecO (242 aa).

This sequence belongs to the RecO family.

In terms of biological role, involved in DNA repair and RecF pathway recombination. The protein is DNA repair protein RecO of Nitrosospira multiformis (strain ATCC 25196 / NCIMB 11849 / C 71).